The sequence spans 173 residues: Ribulose bisphosphate carboxylase small subunit, chloroplastic 2 (173 aa).

The transit peptide at 1-33 (VVLSKECAKPLATPKVTLNKRGFATTIATKNRE) directs the protein to the chloroplast.

The protein belongs to the RuBisCO small chain family. Heterohexadecamer of 8 large and 8 small subunits.

It localises to the plastid. Its subcellular location is the chloroplast. Functionally, ruBisCO catalyzes two reactions: the carboxylation of D-ribulose 1,5-bisphosphate, the primary event in carbon dioxide fixation, as well as the oxidative fragmentation of the pentose substrate. Both reactions occur simultaneously and in competition at the same active site. Although the small subunit is not catalytic it is essential for maximal activity. The sequence is that of Ribulose bisphosphate carboxylase small subunit, chloroplastic 2 from Acetabularia acetabulum (Mermaid's wine glass).